We begin with the raw amino-acid sequence, 881 residues long: DNA replication helicase (881 aa).

The interval 1-32 is disordered; it reads MESADILPGSRGTVDRRCEGSEEKITPPRPVE. Over residues 13 to 32 the composition is skewed to basic and acidic residues; that stretch reads TVDRRCEGSEEKITPPRPVE. 105-112 provides a ligand contact to ATP; that stretch reads GNAGSGKS.

This sequence belongs to the herpesviridae helicase family. In terms of assembly, associates with the primase and the primase-associated factor to form the helicase-primase complex.

It is found in the host nucleus. Its function is as follows. Component of the helicase/primase complex. Unwinds the DNA at the replication forks and generates single-stranded DNA for both leading and lagging strand synthesis. The primase synthesizes short RNA primers on the lagging strand that the polymerase elongates using dNTPs. Possesses helicase-like motifs and therefore may act as the helicase subunit of the complex. The polypeptide is DNA replication helicase (Equus caballus (Horse)).